We begin with the raw amino-acid sequence, 90 residues long: uncharacterized protein (90 aa).

The first 20 residues, 1–20, serve as a signal peptide directing secretion; that stretch reads MEKLFVLVFALALLAFSSDA.

It is found in the secreted. This is an uncharacterized protein from Mus musculus (Mouse).